Consider the following 285-residue polypeptide: Glutamate racemase (285 aa).

Residues 28–29 (DS) and 60–61 (YG) each bind substrate. Cys-92 serves as the catalytic Proton donor/acceptor. 93-94 (NT) lines the substrate pocket. UDP-N-acetyl-alpha-D-muramoyl-L-alanine contacts are provided by residues Arg-104 and 113–119 (GVVPAIK). Cys-204 serves as the catalytic Proton donor/acceptor. Substrate is bound at residue 205–206 (TH).

The protein belongs to the aspartate/glutamate racemases family. As to quaternary structure, monomer.

The catalysed reaction is L-glutamate = D-glutamate. It functions in the pathway cell wall biogenesis; peptidoglycan biosynthesis. Its activity is regulated as follows. The low basal catalytic activity in increased 1000-fold in the presence of UDP-MurNAc-L-Ala, the product of the preceding enzyme in the peptidoglycan biosynthesis. Provides the (R)-glutamate required for cell wall biosynthesis. This chain is Glutamate racemase, found in Escherichia coli (strain K12).